The sequence spans 539 residues: Hydroxylamine reductase (539 aa).

[4Fe-4S] cluster contacts are provided by C3, C6, C14, and C20. Residues H232, E256, C300, C392, C420, C445, E480, and K482 each contribute to the hybrid [4Fe-2O-2S] cluster site. C392 is modified (cysteine persulfide).

Belongs to the HCP family. It depends on [4Fe-4S] cluster as a cofactor. The cofactor is hybrid [4Fe-2O-2S] cluster.

It is found in the cytoplasm. It catalyses the reaction A + NH4(+) + H2O = hydroxylamine + AH2 + H(+). Functionally, catalyzes the reduction of hydroxylamine to form NH(3) and H(2)O. The polypeptide is Hydroxylamine reductase (Chlorobaculum tepidum (strain ATCC 49652 / DSM 12025 / NBRC 103806 / TLS) (Chlorobium tepidum)).